A 52-amino-acid polypeptide reads, in one-letter code: Rubredoxin (52 aa).

In terms of domain architecture, Rubredoxin-like spans 1-52 (MEKWQCTVCGYIYDPEVGDPTQNIPPGTKFEDLPDDWVCPDCGVGKDQFEKI). 4 residues coordinate Fe cation: Cys-6, Cys-9, Cys-39, and Cys-42.

It belongs to the rubredoxin family. It depends on Fe(3+) as a cofactor.

Its function is as follows. Rubredoxin is a small nonheme, iron protein lacking acid-labile sulfide. Its single Fe, chelated to 4 Cys, functions as an electron acceptor and may also stabilize the conformation of the molecule. This chain is Rubredoxin, found in Thermoanaerobacterium thermosaccharolyticum (strain ATCC 7956 / DSM 571 / NCIMB 9385 / NCA 3814 / NCTC 13789 / WDCM 00135 / 2032) (Clostridium thermosaccharolyticum).